Consider the following 639-residue polypeptide: tRNA uridine 5-carboxymethylaminomethyl modification enzyme MnmG (639 aa).

Residue G15 to G20 coordinates FAD. G276–F290 provides a ligand contact to NAD(+).

The protein belongs to the MnmG family. Homodimer. Heterotetramer of two MnmE and two MnmG subunits. FAD serves as cofactor.

The protein resides in the cytoplasm. NAD-binding protein involved in the addition of a carboxymethylaminomethyl (cmnm) group at the wobble position (U34) of certain tRNAs, forming tRNA-cmnm(5)s(2)U34. The protein is tRNA uridine 5-carboxymethylaminomethyl modification enzyme MnmG of Streptococcus gordonii (strain Challis / ATCC 35105 / BCRC 15272 / CH1 / DL1 / V288).